The sequence spans 886 residues: Valine--tRNA ligase (886 aa).

Residues P53–H63 carry the 'HIGH' region motif. The short motif at K540 to S544 is the 'KMSKS' region element. K543 serves as a coordination point for ATP. Residues T819 to D851 are a coiled coil.

Belongs to the class-I aminoacyl-tRNA synthetase family. ValS type 1 subfamily. Monomer.

Its subcellular location is the cytoplasm. The catalysed reaction is tRNA(Val) + L-valine + ATP = L-valyl-tRNA(Val) + AMP + diphosphate. Catalyzes the attachment of valine to tRNA(Val). As ValRS can inadvertently accommodate and process structurally similar amino acids such as threonine, to avoid such errors, it has a 'posttransfer' editing activity that hydrolyzes mischarged Thr-tRNA(Val) in a tRNA-dependent manner. This chain is Valine--tRNA ligase, found in Mycobacterium tuberculosis (strain CDC 1551 / Oshkosh).